We begin with the raw amino-acid sequence, 452 residues long: MQRRIMGIETEFGVTCTFHGHRRLSPDEVARYLFRRVVSWGRSSNVFLRNGARLYLDVGSHPEYATAECDNLIQLVTHDRAGERVLEDLLIDAEQRLADEGIGGDIYLFKNNTDSAGNSYGCHENYLIVRAGEFSRISDVLLPFLVTRQLICGAGKVLQTPKAATFCLSQRAEHIWEGVSSATTRSRPIINTRDEPHADAEKYRRLHVIVGDSNMCESTTMLKVGTASLVLEMIEAGVPFRDFSLDNPIRAIREVSHDLTGRRPVRLAGGRQASALDIQREYYSRAVDYLQTREPNSQIEQVVDLWGRQLDAVESQDFAKVDTEIDWVIKRKLFQRYQDRYNMELSDPKISQLDLAYHDIKRGRGVFDLLQRKGLAARITTDEEIDAAVDTPPQTTRAKLRGEFISAAQEAGRDFTVDWVHLKLNDQAQRTVLCKDPFRSVDERVKRLIASM.

Glu-9 provides a ligand contact to Mg(2+). Arg-53 provides a ligand contact to ATP. Tyr-55 is a Mg(2+) binding site. Asp-57 serves as the catalytic Proton acceptor. Residue Glu-63 coordinates Mg(2+). 2 residues coordinate ATP: Thr-66 and Trp-419.

The protein belongs to the Pup ligase/Pup deamidase family. Pup-conjugating enzyme subfamily.

The catalysed reaction is ATP + [prokaryotic ubiquitin-like protein]-L-glutamate + [protein]-L-lysine = ADP + phosphate + N(6)-([prokaryotic ubiquitin-like protein]-gamma-L-glutamyl)-[protein]-L-lysine.. Its pathway is protein degradation; proteasomal Pup-dependent pathway. It participates in protein modification; protein pupylation. Its function is as follows. Catalyzes the covalent attachment of the prokaryotic ubiquitin-like protein modifier Pup to the proteasomal substrate proteins, thereby targeting them for proteasomal degradation. This tagging system is termed pupylation. The ligation reaction involves the side-chain carboxylate of the C-terminal glutamate of Pup and the side-chain amino group of a substrate lysine. The polypeptide is Pup--protein ligase (Mycobacterium sp. (strain JLS)).